The sequence spans 267 residues: NAD kinase 2 (267 aa).

Asp52 serves as the catalytic Proton acceptor. Residues 52–53 (DG), 124–125 (NE), Arg151, Asp153, 164–169 (TAYNKS), and Ala188 each bind NAD(+).

This sequence belongs to the NAD kinase family. It depends on a divalent metal cation as a cofactor.

Its subcellular location is the cytoplasm. It catalyses the reaction NAD(+) + ATP = ADP + NADP(+) + H(+). In terms of biological role, involved in the regulation of the intracellular balance of NAD and NADP, and is a key enzyme in the biosynthesis of NADP. Catalyzes specifically the phosphorylation on 2'-hydroxyl of the adenosine moiety of NAD to yield NADP. The sequence is that of NAD kinase 2 from Bacillus subtilis (strain 168).